Here is a 124-residue protein sequence, read N- to C-terminus: Fluoride-specific ion channel FluC 2 (124 aa).

A run of 4 helical transmembrane segments spans residues 9–29, 34–54, 67–87, and 99–119; these read LGIF…STWL, DFPW…IYLV, LILA…SLML, and LSLI…AYYL. Residues G77 and T80 each coordinate Na(+).

This sequence belongs to the fluoride channel Fluc/FEX (TC 1.A.43) family.

It localises to the cell membrane. It catalyses the reaction fluoride(in) = fluoride(out). With respect to regulation, na(+) is not transported, but it plays an essential structural role and its presence is essential for fluoride channel function. Its function is as follows. Fluoride-specific ion channel. Important for reducing fluoride concentration in the cell, thus reducing its toxicity. This chain is Fluoride-specific ion channel FluC 2, found in Streptococcus pneumoniae serotype 4 (strain ATCC BAA-334 / TIGR4).